Reading from the N-terminus, the 205-residue chain is Inactive ribonuclease-like protein 9 (205 aa).

Positions 1-26 are cleaved as a signal peptide; the sequence is MMRTLITTHPLPLLLLPQQLLQPVQF. Intrachain disulfides connect Cys98–Cys153, Cys116–Cys168, and Cys123–Cys130. Asn131 and Asn143 each carry an N-linked (GlcNAc...) asparagine glycan.

This sequence belongs to the pancreatic ribonuclease family.

It localises to the secreted. Does not exhibit any ribonuclease activity. This is Inactive ribonuclease-like protein 9 (RNASE9) from Pan troglodytes (Chimpanzee).